The chain runs to 64 residues: Alpha-conotoxin SI (64 aa).

The first 21 residues, 1–21 (MGMRMMFTVFLLVVLATTVVS), serve as a signal peptide directing secretion. The propeptide occupies 22 to 49 (FPSDRASDGRDDEAKDERSDMHESDRKE). The disordered stretch occupies residues 23-47 (PSDRASDGRDDEAKDERSDMHESDR). Over residues 26–47 (RASDGRDDEAKDERSDMHESDR) the composition is skewed to basic and acidic residues. Cystine bridges form between C51–C56 and C52–C62. Residue C62 is modified to Cysteine amide.

This sequence belongs to the conotoxin A superfamily. Expressed by the venom duct.

It localises to the secreted. Its function is as follows. Alpha-conotoxins act on postsynaptic membranes, they bind to the nicotinic acetylcholine receptors (nAChR) and thus inhibit them. Is active on muscle nAChR (IC(50)=113 nM on adult subtype (alpha-1-beta-1-gamma-delta/CHRNA1-CHRNB1-CHRNG-CHRND) and IC(50)=142 nM on fetal subtype (alpha-1-beta-1-delta-epsilon/CHRNA1-CHRNB1-CHRND-CHRNE)). On mice muscle receptors, its higher affinity site is the alpha/delta nAChR subunit interface. On Torpedo receptors, it does not distinguish between alpha/delta and alpha/gamma acetylcholine-binding sites. In vivo, causes paralysis followed by death when injected into goldfish. In contrast, has no effect on mice, when similar doses are intraperitoneally or intracerebrally injected. This Conus striatus (Striated cone) protein is Alpha-conotoxin SI.